Reading from the N-terminus, the 251-residue chain is 3-deoxy-manno-octulosonate cytidylyltransferase (251 aa).

This sequence belongs to the KdsB family.

The protein localises to the cytoplasm. The catalysed reaction is 3-deoxy-alpha-D-manno-oct-2-ulosonate + CTP = CMP-3-deoxy-beta-D-manno-octulosonate + diphosphate. It participates in nucleotide-sugar biosynthesis; CMP-3-deoxy-D-manno-octulosonate biosynthesis; CMP-3-deoxy-D-manno-octulosonate from 3-deoxy-D-manno-octulosonate and CTP: step 1/1. The protein operates within bacterial outer membrane biogenesis; lipopolysaccharide biosynthesis. In terms of biological role, activates KDO (a required 8-carbon sugar) for incorporation into bacterial lipopolysaccharide in Gram-negative bacteria. This is 3-deoxy-manno-octulosonate cytidylyltransferase from Agrobacterium fabrum (strain C58 / ATCC 33970) (Agrobacterium tumefaciens (strain C58)).